An 897-amino-acid polypeptide reads, in one-letter code: DNA endonuclease RBBP8 (897 aa).

The segment at 22–45 is essential for binding to the MRN complex and for RPA focus formation on DNA damage; that stretch reads DLWTKLKECHDREVQGLQVKVTKL. Residues 35–84 are a coiled coil; the sequence is VQGLQVKVTKLKQERILDAQRLEEFFTKNQQLREQQKVLHETIKVLEDRL. The required for interaction with LMO4, probably by stabilizing the interaction through RPPB8 dimerization stretch occupies residues 45–160; it reads LKQERILDAQ…AELECEEDVI (116 aa). Glycyl lysine isopeptide (Lys-Gly) (interchain with G-Cter in SUMO2) cross-links involve residues K62 and K115. Positions 117–138 form a coiled coil; that stretch reads ITELMNERNTLQEENKKLSEQL. K193 is covalently cross-linked (Glycyl lysine isopeptide (Lys-Gly) (interchain with G-Cter in SUMO2)). A phosphoserine mark is found at S233 and S276. The segment covering 292–307 has biased composition (basic and acidic residues); it reads KQPFEESTRNTEDSLR. The segment at 292–325 is disordered; it reads KQPFEESTRNTEDSLRFSDSTSKTPPQEELPTRV. At T315 the chain carries Phosphothreonine; by CDK2. Residues S326, S327, and S349 each carry the phosphoserine modification. Residues K360 and K378 each participate in a glycyl lysine isopeptide (Lys-Gly) (interchain with G-Cter in SUMO2) cross-link. The residue at position 379 (S379) is a Phosphoserine. Glycyl lysine isopeptide (Lys-Gly) (interchain with G-Cter in SUMO2) cross-links involve residues K396, K404, and K410. The disordered stretch occupies residues 419–464; sequence QNRTEYGKDSNTDKHLEPLKSLGGRTSKRKKTEEESEHEVSCPQAS. The span at 420–436 shows a compositional bias: basic and acidic residues; that stretch reads NRTEYGKDSNTDKHLEP. Glycyl lysine isopeptide (Lys-Gly) (interchain with G-Cter in SUMO2) cross-links involve residues K438 and K449. The short motif at 490-494 is the PXDLS motif element; it reads PLDLS. Positions 509–557 are damage-recruitment motif; it reads SETSKNKFRQVTLYEALKTIPKGFSSSRKASDGNCTLPKDSPGEPCSQE. A Glycyl lysine isopeptide (Lys-Gly) (interchain with G-Cter in SUMO2); alternate cross-link involves residue K526. Residues K530, K572, and K578 each participate in a glycyl lysine isopeptide (Lys-Gly) (interchain with G-Cter in SUMO2) cross-link. Residue K604 forms a Glycyl lysine isopeptide (Lys-Gly) (interchain with G-Cter in SUMO2); alternate linkage. Residues K613, K638, and K640 each participate in a glycyl lysine isopeptide (Lys-Gly) (interchain with G-Cter in SUMO2) cross-link. Residues 641 to 685 are required for interaction with LMO4, probably by making physical contact with LMO4; that stretch reads SLQNNQDVSFENIQWSIDPGADLSQYKMDVTVIDTKDGSQSKLGG. At S664 the chain carries Phosphoserine; by ATM. A Glycyl lysine isopeptide (Lys-Gly) (interchain with G-Cter in SUMO2) cross-link involves residue K676. S679 is modified (phosphoserine). The interval 704–723 is disordered; that stretch reads KKQEQKGEKSSNEERKMNDS. K719 participates in a covalent cross-link: Glycyl lysine isopeptide (Lys-Gly) (interchain with G-Cter in SUMO2). S723 is subject to Phosphoserine. S745 carries the phosphoserine; by ATM modification. A Glycyl lysine isopeptide (Lys-Gly) (interchain with G-Cter in SUMO2) cross-link involves residue K782. Residues 840–842 carry the KLHL15-binding motif; that stretch reads FRY. Residue T847 is modified to Phosphothreonine; by CDK1. T859 carries the phosphothreonine; by ATR modification. A Glycyl lysine isopeptide (Lys-Gly) (interchain with G-Cter in SUMO2) cross-link involves residue K869. Positions 873-897 are disordered; that stretch reads DPCPRPKRRQPYNAIFSPKGKEQKT.

It belongs to the COM1/SAE2/CtIP family. As to quaternary structure, homotetramer; formed by antiparallel association of helical extensions protruding from the N-termini of two parallel coiled-coil dimers. Forms a dumbbell-shaped particle in which polar globular domains are held about 30 nm apart by a central rod. Homotetramerization is required for DNA-end resection and repair. Interacts (via the PXDLS motif) with CTBP1; the interaction is disrupted via binding of the adenovirus E1A to CTBP1. Component of the BRCA1-RBBP8 complex. Interacts (the Ser-327 phosphorylated form) with BRCA1 (via the C-terminal BRCT domains): the interaction occurs in the G2 phase, ubiquitinates RBBP8 and involves RBBP8 in BRCA1-dependent G2/M checkpoint control on DNA damage. Interacts with RB1. Interacts with the MRN complex; interacts directly with MRE11; the interaction is required for efficient homologous recombination (HR) and regulation of the MRN complex. Interacts directly with RAD50. Interacts (when phosphorylated by CDK1) with NBN; promoting association with the MRN complex. Interacts with LM04 (via the LIM zinc-binding 1 domain). Interacts with SIAH1. Interacts with RNF138. Interacts with EXD2. Interacts with CUL3 and KLHL15; this interaction leads to RBBP8 proteasomal degradation. Directly interacts with PIN1; this interaction depends upon RBBP8 phosphorylation, predominantly at Thr-315. Interacts with FZR1; this interaction leads to APC/C-mediated RBBP8 proteasomal degradation. Interacts with AUNIP; leading to recruitment of RBBP8 to sites of DNA damage. Interacts with SAMHD1. Interacts with HDGFL2. In terms of processing, hyperphosphorylation upon ionizing radiation results in dissociation from BRCA1. Phosphorylation at Thr-847 by CDK1 is essential for the recruitment to DNA and the DNA repair function. Phosphorylation at Thr-847 and Thr-859 promote interaction with NBN and recruitment to double-strand breaks (DSBs). Phosphorylated on Ser-327 as cells enter G2 phase. This phosphorylation is required for binding BRCA1 and for the G2/M DNA damage transition checkpoint control. Phosphorylation at Thr-315, probably catalyzed by CDK2, is required for PIN1-binding, while phosphorylation at Ser-276 serves as a PIN1 isomerization site. Phosphorylation at Thr-315 is cell-cycle dependent. It steadily increases during S phase, peaks at late S/G2 phase, and drops at G1. Phosphorylation is not required for tetramerization. Binds to DNA more strongly when dephosphorylated. Post-translationally, ubiquitinated. Ubiquitination at multiple sites by BRCA1 (via its N-terminal RING domain) does not lead to its proteasomal degradation but instead the ubiquitinated RBBP8 binds to chromatin following DNA damage and may play a role in G2/M checkpoint control. Ubiquitinated by RNF138 at its N-terminus. Ubiquitinated through 'Lys-48' by the E3 CUL3-KLHL15 complex; this modification leads to proteasomal degradation. Ubiquitinated by the E3 FZR1/APC/C complex; this modification leads to proteasomal degradation. As to expression, expressed in ER-positive breast cancer lines, but tends to be down-regulated ER-negative cells (at protein level).

Its subcellular location is the nucleus. It localises to the chromosome. Functionally, endonuclease that cooperates with the MRE11-RAD50-NBN (MRN) complex in DNA-end resection, the first step of double-strand break (DSB) repair through the homologous recombination (HR) pathway. HR is restricted to S and G2 phases of the cell cycle and preferentially repairs DSBs resulting from replication fork collapse. Key determinant of DSB repair pathway choice, as it commits cells to HR by preventing classical non-homologous end-joining (NHEJ). Specifically promotes the endonuclease activity of the MRN complex to clear DNA ends containing protein adducts: recruited to DSBs by NBN following phosphorylation by CDK1, and promotes the endonuclease activity of MRE11 to clear protein-DNA adducts and generate clean double-strand break ends. Functions downstream of the MRN complex and ATM, promotes ATR activation and its recruitment to DSBs in the S/G2 phase facilitating the generation of ssDNA. Component of the BRCA1-RBBP8 complex that regulates CHEK1 activation and controls cell cycle G2/M checkpoints on DNA damage. During immunoglobulin heavy chain class-switch recombination, promotes microhomology-mediated alternative end joining (A-NHEJ) and plays an essential role in chromosomal translocations. Binds preferentially to DNA Y-junctions and to DNA substrates with blocked ends and promotes intermolecular DNA bridging. The protein is DNA endonuclease RBBP8 (RBBP8) of Homo sapiens (Human).